The following is a 618-amino-acid chain: Proline--tRNA ligase (618 aa).

This sequence belongs to the class-II aminoacyl-tRNA synthetase family. ProS type 1 subfamily. Homodimer.

It is found in the cytoplasm. It catalyses the reaction tRNA(Pro) + L-proline + ATP = L-prolyl-tRNA(Pro) + AMP + diphosphate. Catalyzes the attachment of proline to tRNA(Pro) in a two-step reaction: proline is first activated by ATP to form Pro-AMP and then transferred to the acceptor end of tRNA(Pro). As ProRS can inadvertently accommodate and process non-cognate amino acids such as alanine and cysteine, to avoid such errors it has two additional distinct editing activities against alanine. One activity is designated as 'pretransfer' editing and involves the tRNA(Pro)-independent hydrolysis of activated Ala-AMP. The other activity is designated 'posttransfer' editing and involves deacylation of mischarged Ala-tRNA(Pro). The misacylated Cys-tRNA(Pro) is not edited by ProRS. The chain is Proline--tRNA ligase from Streptococcus equi subsp. zooepidemicus (strain H70).